The primary structure comprises 189 residues: Transcription factor FapR (189 aa).

The protein belongs to the FapR family.

Its function is as follows. Transcriptional factor involved in regulation of membrane lipid biosynthesis by repressing genes involved in fatty acid and phospholipid metabolism. The protein is Transcription factor FapR of Exiguobacterium sibiricum (strain DSM 17290 / CCUG 55495 / CIP 109462 / JCM 13490 / 255-15).